The sequence spans 192 residues: Peptidyl-tRNA hydrolase (192 aa).

His-17 lines the tRNA pocket. His-22 functions as the Proton acceptor in the catalytic mechanism. 3 residues coordinate tRNA: Phe-68, Asn-70, and Asn-116.

The protein belongs to the PTH family. In terms of assembly, monomer.

It localises to the cytoplasm. The catalysed reaction is an N-acyl-L-alpha-aminoacyl-tRNA + H2O = an N-acyl-L-amino acid + a tRNA + H(+). Hydrolyzes ribosome-free peptidyl-tRNAs (with 1 or more amino acids incorporated), which drop off the ribosome during protein synthesis, or as a result of ribosome stalling. Functionally, catalyzes the release of premature peptidyl moieties from peptidyl-tRNA molecules trapped in stalled 50S ribosomal subunits, and thus maintains levels of free tRNAs and 50S ribosomes. The protein is Peptidyl-tRNA hydrolase of Stenotrophomonas maltophilia (strain K279a).